We begin with the raw amino-acid sequence, 226 residues long: MGITGMIYIVTMVFSLIVLILSSSTVGYDYFQFTQQYQPAVCNSKPTPCKDPPDKLFTVHGLWPSNLNGPHPENCTNATVNPHRIKNIQAQLKIIWPNVLDRTNHVGFWNKQWIKHGSCGYPAIMNDTHYFQTVINMYITQKQNVSEILSKAKIEPLGIQRPLVHIENAIRNSTNNKKPKFKCQKNSGVTELVEVGLCSDGSLTQFRNCPHPPPGSPYLCPADVKY.

An N-terminal signal peptide occupies residues 1–27 (MGITGMIYIVTMVFSLIVLILSSSTVG). Gln-36 serves as a coordination point for RNA. An intrachain disulfide couples Cys-42 to Cys-49. His-60 contacts RNA. His-60 acts as the Proton donor in catalysis. 2 N-linked (GlcNAc...) asparagine; alternate glycosylation sites follow: Asn-74 and Asn-77. An intrachain disulfide couples Cys-75 to Cys-119. RNA contacts are provided by residues 98 to 99 (NV), Phe-108, 111 to 112 (KQ), and 115 to 116 (KH). Residue Gln-112 is part of the active site. His-116 (proton acceptor) is an active-site residue. N-linked (GlcNAc...) asparagine glycans are attached at residues Asn-126, Asn-144, and Asn-172. 2 disulfides stabilise this stretch: Cys-183–Cys-220 and Cys-198–Cys-209.

Belongs to the RNase T2 family. Post-translationally, the N-glycans attached at Asn-74 and Asn-77 consist of either monosaccharide (GlcNAc) or disaccharide (GlcNAc-GlcNAc) that could not be distinguished. The N-glycan at Asn-144 contains mannose and xylose, and at Asn-126 contains mannose, xylose and fucose. The N-glycan at Asn-172 consists of disaccharide (GlcNAc-GlcNAc).

It catalyses the reaction a ribonucleotidyl-ribonucleotide-RNA + H2O = a 3'-end 3'-phospho-ribonucleotide-RNA + a 5'-end dephospho-ribonucleoside-RNA + H(+). Its function is as follows. Self-incompatibility (SI) is the inherited ability of a flowering plant to prevent self-fertilization by discriminating between self and non-self pollen during pollination. In many species, self-incompatibility is controlled by the single, multiallelic locus S. This is Ribonuclease S-7 from Pyrus pyrifolia (Chinese pear).